Reading from the N-terminus, the 238-residue chain is Uridylate kinase (238 aa).

Residue 12–15 participates in ATP binding; sequence KLSG. Gly-54 is a binding site for UMP. Gly-55 and Arg-59 together coordinate ATP. Residues Asp-74 and 135–142 each bind UMP; that span reads TGNPFFTT. Residues Thr-162, Tyr-168, and Asp-171 each coordinate ATP.

It belongs to the UMP kinase family. As to quaternary structure, homohexamer.

It localises to the cytoplasm. The enzyme catalyses UMP + ATP = UDP + ADP. It functions in the pathway pyrimidine metabolism; CTP biosynthesis via de novo pathway; UDP from UMP (UMPK route): step 1/1. Its activity is regulated as follows. Inhibited by UTP. Catalyzes the reversible phosphorylation of UMP to UDP. The chain is Uridylate kinase from Dechloromonas aromatica (strain RCB).